The sequence spans 183 residues: UPF0397 protein EF_2154 (183 aa).

Transmembrane regions (helical) follow at residues 10–30, 44–64, 74–94, 115–135, and 147–167; these read IVAI…VVIP, FLAL…GLIG, GSAW…FGFA, IFQA…LDIL, and QGVF…TLLM.

The protein belongs to the UPF0397 family.

Its subcellular location is the cell membrane. The polypeptide is UPF0397 protein EF_2154 (Enterococcus faecalis (strain ATCC 700802 / V583)).